The primary structure comprises 398 residues: S-adenosylmethionine synthase (398 aa).

H26 contacts ATP. Position 28 (D28) interacts with Mg(2+). E54 lines the K(+) pocket. Residues E67 and Q110 each contribute to the L-methionine site. The interval 110–120 (QSPDIAQGVNE) is flexible loop. ATP is bound by residues 177 to 179 (DAK), 243 to 244 (RF), D252, 258 to 259 (RK), A275, and K279. Residue D252 participates in L-methionine binding. Position 283 (K283) interacts with L-methionine.

The protein belongs to the AdoMet synthase family. In terms of assembly, homotetramer; dimer of dimers. Mg(2+) is required as a cofactor. K(+) serves as cofactor.

The protein localises to the cytoplasm. It carries out the reaction L-methionine + ATP + H2O = S-adenosyl-L-methionine + phosphate + diphosphate. The protein operates within amino-acid biosynthesis; S-adenosyl-L-methionine biosynthesis; S-adenosyl-L-methionine from L-methionine: step 1/1. In terms of biological role, catalyzes the formation of S-adenosylmethionine (AdoMet) from methionine and ATP. The overall synthetic reaction is composed of two sequential steps, AdoMet formation and the subsequent tripolyphosphate hydrolysis which occurs prior to release of AdoMet from the enzyme. This is S-adenosylmethionine synthase from Desulfotalea psychrophila (strain LSv54 / DSM 12343).